We begin with the raw amino-acid sequence, 442 residues long: Cytokine receptor-like factor 3 (442 aa).

Position 1 is an N-acetylmethionine (Met-1). A coiled-coil region spans residues 10–57; the sequence is ELLLQEARENVEAAQSYRRELGHRLEGLREARRQIKESASQTRDVLKQ. The Fibronectin type-III domain occupies 181–274; sequence PPVQIEELIE…PQIGHSTLVP (94 aa).

It belongs to the cytokine receptor-like factor 3 family. As to expression, expressed in several embryonic and adult tissues, including adult and fetal brain, liver, spleen and pancreas. Expressed in adult, but not fetal kidney. Expressed in skin and squamous cell carcinoma (SCC) and in several other cancer types. Also detected in lesion actinic keratosis (AK).

It localises to the cytoplasm. In terms of biological role, may play a role in the negative regulation of cell cycle progression. In Homo sapiens (Human), this protein is Cytokine receptor-like factor 3 (CRLF3).